The chain runs to 387 residues: MFKHLRPVWAEINLDNLASNMKHIKELSNTKEIIGIVKADAYGHGALDIVPTLIENGATALAVAVVSEGVELRRGGIECPIMVLGFTPPSLIDMLLKHDIEQTVFSLDYAKELSKAAEKMHKVAKIHIAVDTGMGRIGFLPNEQSIQDVKAISMLPNIKIKGMFSHFSTADEKNKEYSAYQLNQFNKFYEGLKRENVNIETRHISNSAAIMDLPETIFEGVRPGIILYGYYPSNEVDKTKLELKPVMQLKTNVVHIKKIPSGEYISYGRKFKTDRESLIATLPVGYADGYTRLLFGKAKVIINGQLAPVVGRICMDQCMVDITDIKGDIKVGEEVILIGEKNGVKIDADDIAEMLGTINYEVICMISKRVPRVYIKNGEVIKVRNYI.

Catalysis depends on Lys-38, which acts as the Proton acceptor; specific for D-alanine. Residue Lys-38 is modified to N6-(pyridoxal phosphate)lysine. Residue Arg-136 coordinates substrate. The active-site Proton acceptor; specific for L-alanine is Tyr-267. Met-315 is a binding site for substrate.

It belongs to the alanine racemase family. The cofactor is pyridoxal 5'-phosphate.

The catalysed reaction is L-alanine = D-alanine. The protein operates within amino-acid biosynthesis; D-alanine biosynthesis; D-alanine from L-alanine: step 1/1. In terms of biological role, catalyzes the interconversion of L-alanine and D-alanine. May also act on other amino acids. This is Alanine racemase (alr) from Clostridium novyi (strain NT).